The primary structure comprises 281 residues: 3-mercaptopyruvate sulfurtransferase (281 aa).

2 Rhodanese domains span residues 17-135 (DDPE…LLEE) and 165-278 (HENT…LPVE). Arg-179 is a binding site for substrate. Catalysis depends on Cys-238, which acts as the Cysteine persulfide intermediate. The tract at residues 238–244 (CGSGVTA) is substrate specificity.

Its subcellular location is the cytoplasm. It catalyses the reaction 2-oxo-3-sulfanylpropanoate + [thioredoxin]-dithiol = [thioredoxin]-disulfide + hydrogen sulfide + pyruvate + H(+). Functionally, catalyzes the transfer of sulfur from 3-mercaptopyruvate to a thiol-containing acceptor to form an intramolecular disulfide releasing hydrogen sulfide and pyruvate. This is 3-mercaptopyruvate sulfurtransferase (sseA) from Escherichia coli O157:H7.